The chain runs to 52 residues: MCYGYGCGCGSFCRLGYGCGYEGCRYGCGHRGCGDGCCCPSCYRRYRFTGFY.

This sequence belongs to the KRTAP type 19 family. Interacts with hair keratins.

Functionally, in the hair cortex, hair keratin intermediate filaments are embedded in an interfilamentous matrix, consisting of hair keratin-associated proteins (KRTAP), which are essential for the formation of a rigid and resistant hair shaft through their extensive disulfide bond cross-linking with abundant cysteine residues of hair keratins. The matrix proteins include the high-sulfur and high-glycine-tyrosine keratins. This chain is Keratin-associated protein 19-2 (KRTAP19-2), found in Homo sapiens (Human).